Here is a 461-residue protein sequence, read N- to C-terminus: 26S proteasome regulatory subunit 8 (461 aa).

ATP is bound at residue 185–192; it reads GPPGTGKT.

The protein belongs to the AAA ATPase family.

It is found in the cytoplasm. The protein localises to the nucleus. In terms of biological role, the 26S proteasome is involved in the ATP-dependent degradation of ubiquitinated proteins. The regulatory (or ATPase) complex confers ATP dependency and substrate specificity to the 26S complex. This is 26S proteasome regulatory subunit 8 (psmc5) from Xenopus laevis (African clawed frog).